Here is a 157-residue protein sequence, read N- to C-terminus: Ribosomal RNA large subunit methyltransferase H (157 aa).

Residues leucine 74, glycine 106, and 125 to 130 contribute to the S-adenosyl-L-methionine site; that span reads LGNITF.

This sequence belongs to the RNA methyltransferase RlmH family. Homodimer.

It localises to the cytoplasm. It catalyses the reaction pseudouridine(1915) in 23S rRNA + S-adenosyl-L-methionine = N(3)-methylpseudouridine(1915) in 23S rRNA + S-adenosyl-L-homocysteine + H(+). Functionally, specifically methylates the pseudouridine at position 1915 (m3Psi1915) in 23S rRNA. The chain is Ribosomal RNA large subunit methyltransferase H from Lawsonia intracellularis (strain PHE/MN1-00).